We begin with the raw amino-acid sequence, 333 residues long: tRNA-dihydrouridine(16) synthase (333 aa).

FMN-binding positions include 19-21 and glutamine 80; that span reads PMQ. The active-site Proton donor is the cysteine 110. FMN is bound by residues lysine 151, 211 to 213, and 235 to 236; these read NGD and GR.

This sequence belongs to the Dus family. DusC subfamily. The cofactor is FMN.

The enzyme catalyses 5,6-dihydrouridine(16) in tRNA + NADP(+) = uridine(16) in tRNA + NADPH + H(+). It carries out the reaction 5,6-dihydrouridine(16) in tRNA + NAD(+) = uridine(16) in tRNA + NADH + H(+). Its function is as follows. Catalyzes the synthesis of 5,6-dihydrouridine (D), a modified base found in the D-loop of most tRNAs, via the reduction of the C5-C6 double bond in target uridines. Specifically modifies U16 in tRNAs. In Neisseria meningitidis serogroup A / serotype 4A (strain DSM 15465 / Z2491), this protein is tRNA-dihydrouridine(16) synthase.